The chain runs to 246 residues: ABC transporter ATP-binding protein NatA (246 aa).

One can recognise an ABC transporter domain in the interval 2 to 237 (ITLTDCSRRF…ERSEDLNYIF (236 aa)). An ATP-binding site is contributed by 38-45 (GENGAGKT).

This sequence belongs to the ABC transporter superfamily. The complex is composed of NatA and NatB.

It catalyses the reaction Na(+)(in) + ATP + H2O = Na(+)(out) + ADP + phosphate + H(+). Functionally, part of an ABC transporter that catalyzes ATP-dependent electrogenic sodium extrusion. This is ABC transporter ATP-binding protein NatA from Bacillus subtilis (strain 168).